We begin with the raw amino-acid sequence, 394 residues long: Obg-like ATPase 1 (394 aa).

Positions 25–282 constitute an OBG-type G domain; sequence LKIGIVGLPN…MAPDEAAKYC (258 aa). ATP contacts are provided by residues 34–39, 56–60, and 94–97; these read NVGKST, FCTIE, and DIAG. S38 and T58 together coordinate Mg(2+). F129 is a GTP binding site. Residues 230–231, L231, and 263–265 contribute to the ATP site; these read NL and SGV. 263–265 is a GTP binding site; that stretch reads SGV. Positions 303 to 386 constitute a TGS domain; sequence NLIYFFTAGP…QDGDIIFFKF (84 aa).

The protein belongs to the TRAFAC class OBG-HflX-like GTPase superfamily. OBG GTPase family. YchF/OLA1 subfamily. Monomer (Potential). Interacts with CAR4/GAP1. Mg(2+) is required as a cofactor.

Its subcellular location is the cytoplasm. It localises to the cytosol. Its activity is regulated as follows. Activated by GAP1. Functionally, hydrolyzes ATP, and can also hydrolyze GTP with lower efficiency. Has lower affinity for GTP (Potential). Exhibits GTPase activity. Confers sensitivity to salinity stress by suppressing the anti-oxidation enzymatic activities and increasing lipid peroxidation thus leading to the accumulation of reactive oxygen species (ROS). Acts as a negative regulator of disease resistance against bacterial pathogen. The chain is Obg-like ATPase 1 from Arabidopsis thaliana (Mouse-ear cress).